A 506-amino-acid chain; its full sequence is Squalene monooxygenase 1,1 (506 aa).

2 consecutive transmembrane segments (helical) span residues Leu-3–Phe-23 and Asp-47–Ala-67. Residues Val-57–Gly-58, Glu-77–Arg-78, Arg-85, Phe-90, Arg-157, Val-173, Asp-336, and Met-349 each bind FAD. Residues Leu-447–Pro-467 form a helical membrane-spanning segment.

This sequence belongs to the squalene monooxygenase family. FAD is required as a cofactor.

The protein resides in the membrane. It carries out the reaction squalene + reduced [NADPH--hemoprotein reductase] + O2 = (S)-2,3-epoxysqualene + oxidized [NADPH--hemoprotein reductase] + H2O + H(+). It functions in the pathway terpene metabolism; lanosterol biosynthesis; lanosterol from farnesyl diphosphate: step 2/3. Its function is as follows. Catalyzes the stereospecific oxidation of squalene to (S)-2,3-epoxysqualene, and is considered to be a rate-limiting enzyme in steroid biosynthesis. This Brassica napus (Rape) protein is Squalene monooxygenase 1,1 (SQP1,1).